Here is a 446-residue protein sequence, read N- to C-terminus: Histidine--tRNA ligase (446 aa).

A disordered region spans residues 403–422 (TASVKPLRGTGDDGEKSVQQ).

The protein belongs to the class-II aminoacyl-tRNA synthetase family. Homodimer.

The protein localises to the cytoplasm. It catalyses the reaction tRNA(His) + L-histidine + ATP = L-histidyl-tRNA(His) + AMP + diphosphate + H(+). This Burkholderia thailandensis (strain ATCC 700388 / DSM 13276 / CCUG 48851 / CIP 106301 / E264) protein is Histidine--tRNA ligase.